A 307-amino-acid chain; its full sequence is MAESDRLLGGYDPNAGYSAHAGAQPQRIPVPSLLRALLSEHLDAGYAAVAAERERAAAPRCWQARAVSWMWQALAATLVAAVFAAAVAQARSVAPGVRAAQQLLVASVRSTQAAATTLAQRRSTLSAKVDDVRRIVLADDAEGQRLLARLDVLSLAAASAPVVGPGLTVTVTDPGASPNLSDVSKQRVSGSQQIILDRDLQLVVNSLWESGAEAISIDGVRIGPNVTIRQAGGAILVDNNPTSSPYTILAVGPPHAMQDVFDRSAGLYRLRLLETSYGVGVSVNVGDGLALPAGATRDVKFAKQIGP.

A signal peptide spans 1 to 23; it reads MAESDRLLGGYDPNAGYSAHAGA. 2 helical membrane passes run 67–87 and 152–172; these read VSWM…AAAV and VLSL…VTVT.

Belongs to the UPF0749 family.

The protein resides in the cell membrane. In Mycobacterium tuberculosis (strain CDC 1551 / Oshkosh), this protein is UPF0749 protein MT1871.